Here is a 228-residue protein sequence, read N- to C-terminus: Ran-binding protein 1 homolog a (228 aa).

Basic and acidic residues predominate over residues 1–13; it reads MATNEPEHEHRDE. 2 disordered regions span residues 1 to 30 and 159 to 228; these read MATN…QVAP and SEEE…GPST. A compositionally biased stretch (acidic residues) spans 14–24; that stretch reads EEAGANEDEDT. The RanBD1 domain occupies 27–162; it reads QVAPIVRLEE…FKEVAESEEE (136 aa). The span at 179–228 shows a compositional bias: basic and acidic residues; that stretch reads LTVEETKTEEKTEAKAVETAKTEVKAEEKKESEAEKSGEAKKTEESGPST.

In terms of assembly, interacts with the GTP-bound form of RAN1, RAN2 and RAN3. Ubiquitous. Preferentially expressed in root tips and gynoecium.

The protein resides in the nucleus. It is found in the nuclear pore complex. The protein is Ran-binding protein 1 homolog a (RANBP1A) of Arabidopsis thaliana (Mouse-ear cress).